The sequence spans 92 residues: MIIDLVKRPVITEKATRILEKNQYTFDVELSLTKPKIKALIEKAFKVEVVSVNTHRPPRRKRRLGTTQGYLPRYKRAIITLKRGFMIPLTPF.

The protein belongs to the universal ribosomal protein uL23 family. Part of the 50S ribosomal subunit.

The protein localises to the plastid. It localises to the chloroplast. Functionally, binds to 23S rRNA. The protein is Large ribosomal subunit protein uL23c (rpl23) of Nephroselmis olivacea (Green alga).